The chain runs to 393 residues: 4-O-methyl-glucuronoyl methylesterase (393 aa).

Residues 1 to 19 (MKLSAALLAIAAFANVASA) form the signal peptide. Glutamine 20 carries the pyrrolidone carboxylic acid modification. A disulfide bridge links cysteine 22 with cysteine 56. Residues asparagine 103 and asparagine 168 are each glycosylated (N-linked (GlcNAc...) asparagine). The GXSYXG catalytic site motif motif lies at 203–208 (GCSRNG). 2 disulfide bridges follow: cysteine 204–cysteine 340 and cysteine 236–cysteine 312. Serine 205 functions as the Nucleophile in the catalytic mechanism. Substrate is bound by residues lysine 209, glutamine 251, glutamate 259, and tryptophan 303. Catalysis depends on histidine 339, which acts as the Proton donor/acceptor.

It belongs to the carbohydrate esterase 15 (CE15) family.

The protein resides in the secreted. The enzyme catalyses a 4-O-methyl-alpha-D-glucuronosyl ester derivative + H2O = 4-O-methyl-alpha-D-glucuronate derivative + an alcohol + H(+). In terms of biological role, glucuronoyl esterase which may play a significant role in biomass degradation, as it is considered to disconnect hemicellulose from lignin through the hydrolysis of the ester bond between 4-O-methyl-D-glucuronic acid residues of glucuronoxylans and aromatic alcohols of lignin. The sequence is that of 4-O-methyl-glucuronoyl methylesterase from Schizophyllum commune (strain H4-8 / FGSC 9210) (Split gill fungus).